The following is a 335-amino-acid chain: Serpentine receptor class alpha-13 (335 aa).

At 1-25 the chain is on the extracellular side; the sequence is MAIISSVNRTCASESLLELYRSYKY. The chain crosses the membrane as a helical span at residues 26 to 46; it reads ILSTSFNIIIPIISLFFLVYA. Over 47–61 the chain is Cytoplasmic; it reads IKQLCAQSIIQYSTR. The helical transmembrane segment at 62–82 threads the bilayer; it reads VLLITTILFAVCHQIAYFCFK. The Extracellular portion of the chain corresponds to 83-108; it reads ADLLYTMLFKLDQPCNLQHSSYDCRF. Residues 109–129 traverse the membrane as a helical segment; it reads ITIATTTSNCGMALVQLAMSI. Residues 130–146 are Cytoplasmic-facing; it reads DRVFALKFNRVYYKLKS. A helical membrane pass occupies residues 147–167; sequence IPGITLALITLSISFSMFFIL. Residues 168 to 192 are Extracellular-facing; sequence TIDDPLSGYVNHCGFYPTYSQDKFH. The helical transmembrane segment at 193–213 threads the bilayer; the sequence is IFLDVTLYLAVFNFVFDIGLM. At 214–243 the chain is on the cytoplasmic side; that stretch reads YYSYQEILWKRSYSFVNRFQSRISLKCTQA. Residues 244–264 form a helical membrane-spanning segment; the sequence is IFIISICQCISNVLYSGLLSL. The Extracellular portion of the chain corresponds to 265 to 278; the sequence is LMKLGRYMSSADYN. The chain crosses the membrane as a helical span at residues 279–299; sequence LSLSLAYTTPYSCLILPILIC. The Cytoplasmic segment spans residues 300 to 335; the sequence is KVLEYIKKQRTVGILSLRNQKQSMEGHMAMINSAWK.

The protein belongs to the nematode receptor-like protein sra family. As to expression, expressed in the AWA and AWC chemosensory neurons.

It localises to the membrane. Its function is as follows. Chemosensory receptor that negatively regulates RAS/MAPK signaling during vulva induction and the negative regulation of olfaction of volitile attractants. Required for the suppression of vulval induction in response to food starvation. Signaling acts through the GPA-5 G-alpha protein subunit. The protein is Serpentine receptor class alpha-13 (sra-13) of Caenorhabditis elegans.